We begin with the raw amino-acid sequence, 699 residues long: Elongation factor G (699 aa).

Residues 8–290 (ERYRNIGIMA…AVLDYLPSPV (283 aa)) enclose the tr-type G domain. Residues 17 to 24 (AHIDAGKT), 88 to 92 (DTPGH), and 142 to 145 (NKMD) each bind GTP.

The protein belongs to the TRAFAC class translation factor GTPase superfamily. Classic translation factor GTPase family. EF-G/EF-2 subfamily.

The protein localises to the cytoplasm. Its function is as follows. Catalyzes the GTP-dependent ribosomal translocation step during translation elongation. During this step, the ribosome changes from the pre-translocational (PRE) to the post-translocational (POST) state as the newly formed A-site-bound peptidyl-tRNA and P-site-bound deacylated tRNA move to the P and E sites, respectively. Catalyzes the coordinated movement of the two tRNA molecules, the mRNA and conformational changes in the ribosome. This is Elongation factor G from Acidithiobacillus ferrooxidans (strain ATCC 23270 / DSM 14882 / CIP 104768 / NCIMB 8455) (Ferrobacillus ferrooxidans (strain ATCC 23270)).